We begin with the raw amino-acid sequence, 160 residues long: Cytochrome b6-f complex subunit 4 (160 aa).

A run of 3 helical transmembrane segments spans residues 36 to 56, 95 to 115, and 131 to 151; these read LLYI…GLAV, LLGV…PFLE, and TVFL…TLPI.

Belongs to the cytochrome b family. PetD subfamily. The 4 large subunits of the cytochrome b6-f complex are cytochrome b6, subunit IV (17 kDa polypeptide, petD), cytochrome f and the Rieske protein, while the 4 small subunits are petG, petL, petM and petN. The complex functions as a dimer.

Its subcellular location is the plastid. It is found in the chloroplast thylakoid membrane. Functionally, component of the cytochrome b6-f complex, which mediates electron transfer between photosystem II (PSII) and photosystem I (PSI), cyclic electron flow around PSI, and state transitions. The sequence is that of Cytochrome b6-f complex subunit 4 from Solanum tuberosum (Potato).